Consider the following 409-residue polypeptide: MARDVKKVVLAYSGGLDTSVILKWLQTTYKCEVITFTADLGQGEELEPARKKAQLLGIKDENIFIEDVREEFVAEYVFPMFRANAVYEGLYLLGTSIARPLIAKKQIEIARKMGADAVSHGATGKGNDQVRFELGYYALEPEITVIAPWREWDLTSRTRLLEFAEQHQIPIAKDKRGEAPFSVDANLLHSSSEGKVLEDPAEDAPEYVYQRTISPEAAPDEPTIITIAFDKGDAVAINGEALSPATLLTKLNELGKANGIGRLDLVENRFVGMKSRGVYETPGGTILLAAHRGIESITLDRGAAHLKDELMPRYAELIYNGFWFSPEREMLQAAIDHSQAYVTGEVTVKLYKGNTTVIGRKSPYSLYNQELVTFEEGAVAYDHRDAAGFIKLNALRLRTLGSRARKISE.

ATP is bound by residues 11-19 (AYSGGLDTS) and alanine 38. L-citrulline contacts are provided by tyrosine 91 and serine 96. Residue glycine 121 coordinates ATP. L-aspartate contacts are provided by threonine 123, asparagine 127, and aspartate 128. Asparagine 127 is a binding site for L-citrulline. 5 residues coordinate L-citrulline: arginine 131, serine 182, serine 191, glutamate 267, and tyrosine 279.

This sequence belongs to the argininosuccinate synthase family. Type 1 subfamily. In terms of assembly, homotetramer.

The protein localises to the cytoplasm. The enzyme catalyses L-citrulline + L-aspartate + ATP = 2-(N(omega)-L-arginino)succinate + AMP + diphosphate + H(+). It participates in amino-acid biosynthesis; L-arginine biosynthesis; L-arginine from L-ornithine and carbamoyl phosphate: step 2/3. The sequence is that of Argininosuccinate synthase from Xanthobacter autotrophicus (strain ATCC BAA-1158 / Py2).